The primary structure comprises 926 residues: Storkhead-box protein 2 (926 aa).

Disordered stretches follow at residues 1–32 (MKKT…RSEK), 338–393 (EEEK…DIPG), 452–529 (EMPF…SYID), 564–586 (KEPS…PSYG), 633–693 (VKKL…SLDK), 723–802 (LLKS…VGTM), and 823–926 (TLLT…VTSV). Positions 18-32 (FSDRASDRMRSRSEK) are enriched in basic and acidic residues. The segment covering 353–378 (HSGRSKKSRTHRKSHGKSRSHSKTRV) has biased composition (basic residues). A compositionally biased stretch (basic and acidic residues) spans 379 to 393 (SKGDPSDGSHLDIPG). Residues 463-472 (SHSKVHRSHS) show a composition bias toward basic residues. A compositionally biased stretch (basic and acidic residues) spans 473-495 (HTQDRRSRNERSNKAKERSRSMD). A compositionally biased stretch (polar residues) spans 518–529 (QDDQTPSQSYID). 2 stretches are compositionally biased toward basic and acidic residues: residues 633 to 658 (VKKL…EESP) and 684 to 693 (HSAEPSSLDK). Residues 746–769 (LGTSAAQAMPPSQRQQEPGGNQEA) are compositionally biased toward polar residues. Residues 785–799 (GANKNAEEEKNRDDV) are compositionally biased toward basic and acidic residues. Polar residues-rich tracts occupy residues 847 to 884 (MDSS…QNPA) and 914 to 926 (KPSN…VTSV).

The polypeptide is Storkhead-box protein 2 (Stox2) (Mus musculus (Mouse)).